The following is a 386-amino-acid chain: Succinate--CoA ligase [ADP-forming] subunit beta (386 aa).

Residues 9–244 (KHILSRFGVS…YDEEIKEEIE (236 aa)) form the ATP-grasp domain. Residues K46, 53–55 (GRG), E99, C102, and E107 contribute to the ATP site. 2 residues coordinate Mg(2+): N199 and D213. Residues N264 and 320–322 (GIM) each bind substrate.

Belongs to the succinate/malate CoA ligase beta subunit family. Heterotetramer of two alpha and two beta subunits. Mg(2+) serves as cofactor.

It carries out the reaction succinate + ATP + CoA = succinyl-CoA + ADP + phosphate. The catalysed reaction is GTP + succinate + CoA = succinyl-CoA + GDP + phosphate. Its pathway is carbohydrate metabolism; tricarboxylic acid cycle; succinate from succinyl-CoA (ligase route): step 1/1. Succinyl-CoA synthetase functions in the citric acid cycle (TCA), coupling the hydrolysis of succinyl-CoA to the synthesis of either ATP or GTP and thus represents the only step of substrate-level phosphorylation in the TCA. The beta subunit provides nucleotide specificity of the enzyme and binds the substrate succinate, while the binding sites for coenzyme A and phosphate are found in the alpha subunit. This is Succinate--CoA ligase [ADP-forming] subunit beta from Ehrlichia canis (strain Jake).